The chain runs to 158 residues: Ribonuclease HI (158 aa).

Residues 3–144 (ELKLIHIFTD…CDQLARAAAE (142 aa)) form the RNase H type-1 domain. The Mg(2+) site is built by aspartate 12, glutamate 50, aspartate 72, and aspartate 136.

This sequence belongs to the RNase H family. Monomer. Mg(2+) serves as cofactor.

It is found in the cytoplasm. It catalyses the reaction Endonucleolytic cleavage to 5'-phosphomonoester.. Its function is as follows. Endonuclease that specifically degrades the RNA of RNA-DNA hybrids. In Shewanella oneidensis (strain ATCC 700550 / JCM 31522 / CIP 106686 / LMG 19005 / NCIMB 14063 / MR-1), this protein is Ribonuclease HI.